A 248-amino-acid polypeptide reads, in one-letter code: Pulmonary surfactant-associated protein A2 (248 aa).

Positions 1-20 (MWLCPLALTLILMAASGAAC) are cleaved as a signal peptide. Residues 28 to 100 (GSPGIPGTPG…AGERGPPGLP (73 aa)) enclose the Collagen-like domain. P30, P33, P36, P42, P54, P57, P63, P67, and P70 each carry 4-hydroxyproline. Residues 33–101 (PGTPGSHGLP…GERGPPGLPA (69 aa)) form a disordered region. The span at 42–51 (PGRDGRDGVK) shows a compositional bias: basic and acidic residues. The segment covering 54-70 (PGPPGPMGPPGETPCPP) has biased composition (pro residues). Residues 71–82 (GNNGLPGAPGVP) are compositionally biased toward low complexity. A compositionally biased stretch (basic and acidic residues) spans 84–93 (ERGEKGEAGE). The C-type lectin domain maps to 132 to 248 (MTVGEKVFSS…LYSRLTICEF (117 aa)). Cystine bridges form between C155–C246 and C224–C238. The N-linked (GlcNAc...) asparagine glycan is linked to N207.

It belongs to the SFTPA family. As to quaternary structure, oligomeric complex of 6 set of homotrimers. N-acetylated.

It is found in the secreted. The protein localises to the extracellular space. It localises to the extracellular matrix. Its subcellular location is the surface film. In terms of biological role, in presence of calcium ions, it binds to surfactant phospholipids and contributes to lower the surface tension at the air-liquid interface in the alveoli of the mammalian lung and is essential for normal respiration. This Homo sapiens (Human) protein is Pulmonary surfactant-associated protein A2 (SFTPA2).